The sequence spans 39 residues: Basic phospholipase A2 (39 aa).

Ca(2+) is bound by residues Y27, G29, and G31.

The protein belongs to the phospholipase A2 family. Group II subfamily. D49 sub-subfamily. Ca(2+) serves as cofactor. In terms of tissue distribution, expressed by the venom gland.

The protein localises to the secreted. It carries out the reaction a 1,2-diacyl-sn-glycero-3-phosphocholine + H2O = a 1-acyl-sn-glycero-3-phosphocholine + a fatty acid + H(+). With respect to regulation, is selectively inhibited by the gamma-phospholipase A2 inhibitor (PLI) CgMIP-I (AC P0DQP7) but not by the alpha-PLI CgMIP-II (AC P0DQP8). Its function is as follows. Snake venom phospholipase A2 (PLA2) that shows high myotoxic activities, induces mild edema, and shows cytolytic, and anti-coagulant activities, as well as intracerebral lethal effect. Does not induce lethality at a dose of 5 ug/g, when intravenously injected into mice. PLA2 catalyzes the calcium-dependent hydrolysis of the 2-acyl groups in 3-sn-phosphoglycerides. The polypeptide is Basic phospholipase A2 (Cerrophidion godmani (Porthidium godmani)).